Consider the following 361-residue polypeptide: Probable cysteine protease RD19B (361 aa).

An N-terminal signal peptide occupies residues 1–24 (MDYHLRVLFSVSLIFVFVSVSVCG). The propeptide at 25–131 (DEDVLIRQVV…NQAPILPTQN (107 aa)) is activation peptide. Cystine bridges form between Cys-153/Cys-203 and Cys-187/Cys-237. The active site involves Cys-156. N-linked (GlcNAc...) asparagine glycosylation occurs at Asn-250. Cysteines 293 and 347 form a disulfide. Active-site residues include His-299 and Asn-326.

It belongs to the peptidase C1 family.

The protein resides in the lytic vacuole. Its function is as follows. Probable thiol protease. This is Probable cysteine protease RD19B from Arabidopsis thaliana (Mouse-ear cress).